The following is a 1228-amino-acid chain: Calcium-transporting ATPase (1228 aa).

The Cytoplasmic portion of the chain corresponds to 1-63 (MEEVIKNAHT…FELILNQFDD (63 aa)). Residues 64–81 (LLVKILLLAAFISFVLTL) form a helical membrane-spanning segment. At 82–92 (LDMKHKKIEIC) the chain is on the extracellular side. The chain crosses the membrane as a helical span at residues 93–112 (DFIEPLVIVLILILNAAVGV). The Cytoplasmic portion of the chain corresponds to 113–270 (WQECNAEKSL…IDLFGQQLSK (158 aa)). The chain crosses the membrane as a helical span at residues 271–291 (IIFVICVTVWIINFKHFSDPI). The Extracellular segment spans residues 292 to 300 (HGSFLYGCL). A helical membrane pass occupies residues 301 to 321 (YYFKISVALAVAAIPEGLPAV). The Cytoplasmic segment spans residues 322-974 (ITTCLALGTR…IYNNMKAFIR (653 aa)). Catalysis depends on Asp358, which acts as the 4-aspartylphosphate intermediate. Disordered regions lie at residues 452–478 (MKNDLNNNNNNNNNSSRSGAKRNIPLK) and 562–613 (MPAE…LKNA). The segment covering 589-604 (FFSSKNDNSHITSTLN) has biased composition (polar residues). Lys716 is an ATP binding site. The chain crosses the membrane as a helical span at residues 975–994 (YLISSNIGEVASIFITALLG). Residues 995 to 1000 (IPDSLA) lie on the Extracellular side of the membrane. Residues 1001 to 1021 (PVQLLWVNLVTDGLPATALGF) form a helical membrane-spanning segment. Topologically, residues 1022–1042 (NPPEHDVMKCKPRHKNDNLIN) are cytoplasmic. The chain crosses the membrane as a helical span at residues 1043 to 1067 (GLTLLRYIIIGTYVGIATVSIFVYW). Over 1068-1118 (FLFYPDSDMHTLINFYQLSHYNQCKAWNNFRVNKVYDMSEDHCSYFSAGKI) the chain is Extracellular. Residues 1119–1140 (KASTLSLSVLVLIEMFNALNAL) form a helical membrane-spanning segment. The Cytoplasmic segment spans residues 1141-1151 (SEYNSLFEIPP). The chain crosses the membrane as a helical span at residues 1152-1172 (WRNMYLVLATIGSLLLHVLIL). At 1173–1185 (YIPPLARIFGVVP) the chain is on the extracellular side. Residues 1186–1206 (LSAYDWFLVFLWSFPVIILDE) traverse the membrane as a helical segment. The Cytoplasmic portion of the chain corresponds to 1207 to 1228 (IIKFYAKRKLKEEQRTKKIKID).

This sequence belongs to the cation transport ATPase (P-type) (TC 3.A.3) family.

Its subcellular location is the membrane. It carries out the reaction Ca(2+)(in) + ATP + H2O = Ca(2+)(out) + ADP + phosphate + H(+). Its function is as follows. This magnesium-dependent enzyme catalyzes the hydrolysis of ATP coupled with the transport of the calcium. The protein is Calcium-transporting ATPase (ATP6) of Plasmodium falciparum (isolate K1 / Thailand).